The primary structure comprises 131 residues: Ribosome-binding factor A (131 aa).

The protein belongs to the RbfA family. As to quaternary structure, monomer. Binds 30S ribosomal subunits, but not 50S ribosomal subunits or 70S ribosomes.

Its subcellular location is the cytoplasm. One of several proteins that assist in the late maturation steps of the functional core of the 30S ribosomal subunit. Associates with free 30S ribosomal subunits (but not with 30S subunits that are part of 70S ribosomes or polysomes). Required for efficient processing of 16S rRNA. May interact with the 5'-terminal helix region of 16S rRNA. This is Ribosome-binding factor A from Thermotoga maritima (strain ATCC 43589 / DSM 3109 / JCM 10099 / NBRC 100826 / MSB8).